A 492-amino-acid chain; its full sequence is PHO85 cyclin-8 (492 aa).

Disordered regions lie at residues M1–S32, S143–R163, and K223–S252. Polar residues predominate over residues N8–M20. Acidic residues predominate over residues F23 to S32. S32 is modified (phosphoserine).

It belongs to the cyclin family. PHO80 subfamily. Forms a cyclin-CDK complex with PHO85.

The protein resides in the cytoplasm. The protein localises to the nucleus. Cyclin partner of the cyclin-dependent kinase (CDK) PHO85. Together with cyclin PCL10, negatively controls glycogen accumulation under favorable growth conditions. Involved in phosphorylation and negative regulation of glycogen synthase GSY2. Also has minor GLC8 kinase activity. The chain is PHO85 cyclin-8 (PCL8) from Saccharomyces cerevisiae (strain ATCC 204508 / S288c) (Baker's yeast).